Reading from the N-terminus, the 206-residue chain is Guanylate kinase (206 aa).

One can recognise a Guanylate kinase-like domain in the interval 6–184 (GILFILSGPS…AVDKVKTIIK (179 aa)). ATP is bound at residue 13 to 20 (GPSGVGKG).

This sequence belongs to the guanylate kinase family.

It localises to the cytoplasm. It catalyses the reaction GMP + ATP = GDP + ADP. Its function is as follows. Essential for recycling GMP and indirectly, cGMP. The sequence is that of Guanylate kinase from Oceanobacillus iheyensis (strain DSM 14371 / CIP 107618 / JCM 11309 / KCTC 3954 / HTE831).